Consider the following 534-residue polypeptide: Calcium-dependent protein kinase 29 (534 aa).

Residues 1-72 are disordered; sequence MGFCFSKFGK…STSSGSQIGP (72 aa). Gly-2 carries the N-myristoyl glycine lipid modification. Residues 16 to 27 show a composition bias toward low complexity; that stretch reads IPISSSSDSSPP. Pro residues predominate over residues 49-63; sequence NPQPKPKPAPPPPPS. The 259-residue stretch at 85 to 343 folds into the Protein kinase domain; that stretch reads YDLHKELGRG…AAEALEHPWM (259 aa). ATP-binding positions include 91-99 and Lys-114; that span reads LGRGQFGIT. Asp-209 acts as the Proton acceptor in catalysis. At Ser-249 the chain carries Phosphoserine. The autoinhibitory domain stretch occupies residues 348 to 378; that stretch reads ISDKPINSAVLVRMKQFRAMNKLKKLALKVI. EF-hand domains are found at residues 385-420, 421-456, 457-492, and 493-527; these read EEIKGLKQTFKNMDTDESGTITFDELRNGLHRLGSK, LTESEIKQLMEAADVDKSGTIDYIEFVTATMHRHRL, EKEENLIEAFKYFDKDRSGFITRDELKHSMTEYGMG, and DDATIDEVINDVDTDNDGRINYEEFVAMMRKGTTD. The Ca(2+) site is built by Asp-398, Asp-400, Ser-402, Thr-404, Glu-409, Asp-434, Asp-436, Ser-438, Thr-440, Glu-445, Asp-470, Asp-472, Ser-474, Glu-481, Asp-505, Asp-507, Asp-509, Arg-511, and Glu-516.

Belongs to the protein kinase superfamily. Ser/Thr protein kinase family. CDPK subfamily.

It localises to the membrane. The catalysed reaction is L-seryl-[protein] + ATP = O-phospho-L-seryl-[protein] + ADP + H(+). It catalyses the reaction L-threonyl-[protein] + ATP = O-phospho-L-threonyl-[protein] + ADP + H(+). With respect to regulation, activated by calcium. Autophosphorylation may play an important role in the regulation of the kinase activity. Its function is as follows. May play a role in signal transduction pathways that involve calcium as a second messenger. In Arabidopsis thaliana (Mouse-ear cress), this protein is Calcium-dependent protein kinase 29 (CPK29).